Consider the following 185-residue polypeptide: Ribosome-recycling factor (185 aa).

This sequence belongs to the RRF family.

It localises to the cytoplasm. Responsible for the release of ribosomes from messenger RNA at the termination of protein biosynthesis. May increase the efficiency of translation by recycling ribosomes from one round of translation to another. The chain is Ribosome-recycling factor from Thermosipho africanus (strain TCF52B).